The following is a 407-amino-acid chain: DAZ-associated protein 1 (407 aa).

Met1 is modified (N-acetylmethionine). RRM domains lie at Gly10 to Pro97 and Asn113 to Pro190. The tract at residues Thr74–Val117 is disordered. A compositionally biased stretch (basic and acidic residues) spans Gln91–Lys111. The residue at position 150 (Lys150) is an N6-acetyllysine. Positions Val185 to Lys194 are enriched in basic and acidic residues. The tract at residues Val185–Arg407 is disordered. The span at Ser195 to Gly207 shows a compositional bias: polar residues. Over residues Gly247–Phe262 the composition is skewed to pro residues. The residue at position 253 (Arg253) is an Omega-N-methylarginine. The span at Phe280–Tyr294 shows a compositional bias: low complexity. Residues Gly295–Thr315 are compositionally biased toward pro residues. The span at Ser364–Pro379 shows a compositional bias: low complexity. Gly residues predominate over residues Gly380 to Arg393.

As to quaternary structure, interacts with DAZ and DAZL. Acetylation at Lys-150 is predominantly observed in the nuclear fraction, and may regulate nucleocytoplasmic transport. In terms of tissue distribution, mainly expressed in testis. Expressed to a lower level in thymus. Weakly or not expressed in heart, liver, brain, placenta, lung, skeletal muscle, kidney and pancreas.

It is found in the cytoplasm. The protein resides in the nucleus. Its function is as follows. RNA-binding protein, which may be required during spermatogenesis. This chain is DAZ-associated protein 1 (DAZAP1), found in Homo sapiens (Human).